A 1069-amino-acid chain; its full sequence is Carbamoyl phosphate synthase large chain (1069 aa).

The carboxyphosphate synthetic domain stretch occupies residues 1–401; that stretch reads MPLNKDIKKV…AFLKGIRSLE (401 aa). Residues Arg-129, Arg-169, Gly-175, Gly-176, Lys-208, Val-210, Glu-215, Gly-241, Ile-242, His-243, Gln-284, and Glu-298 each coordinate ATP. The 195-residue stretch at 133 to 327 folds into the ATP-grasp 1 domain; that stretch reads RDMMNRIGEP…IAKLAAKIAL (195 aa). Gln-284, Glu-298, and Asn-300 together coordinate Mg(2+). Mn(2+)-binding residues include Gln-284, Glu-298, and Asn-300. An oligomerization domain region spans residues 402–549; that stretch reads IGKYSLDHNK…YSTYEQYDEV (148 aa). Residues 550 to 932 are carbamoyl phosphate synthetic domain; it reads EVSNNKKVIV…ALYKGFVGAY (383 aa). Residues 674 to 864 form the ATP-grasp 2 domain; that stretch reads DELLERLGIS…IVDLATQVML (191 aa). 10 residues coordinate ATP: Arg-710, Lys-749, Leu-751, Glu-755, Gly-780, Val-781, His-782, Ser-783, Gln-823, and Glu-835. Mg(2+)-binding residues include Gln-823, Glu-835, and Asn-837. Residues Gln-823, Glu-835, and Asn-837 each coordinate Mn(2+). In terms of domain architecture, MGS-like spans 932-1069; that stretch reads YMYPSKEKGK…KDLEVFNIAK (138 aa). The segment at 933 to 1069 is allosteric domain; sequence MYPSKEKGKI…KDLEVFNIAK (137 aa).

Belongs to the CarB family. As to quaternary structure, composed of two chains; the small (or glutamine) chain promotes the hydrolysis of glutamine to ammonia, which is used by the large (or ammonia) chain to synthesize carbamoyl phosphate. Tetramer of heterodimers (alpha,beta)4. Mg(2+) serves as cofactor. Requires Mn(2+) as cofactor.

The enzyme catalyses hydrogencarbonate + L-glutamine + 2 ATP + H2O = carbamoyl phosphate + L-glutamate + 2 ADP + phosphate + 2 H(+). It carries out the reaction hydrogencarbonate + NH4(+) + 2 ATP = carbamoyl phosphate + 2 ADP + phosphate + 2 H(+). The protein operates within amino-acid biosynthesis; L-arginine biosynthesis; carbamoyl phosphate from bicarbonate: step 1/1. It participates in pyrimidine metabolism; UMP biosynthesis via de novo pathway; (S)-dihydroorotate from bicarbonate: step 1/3. Its function is as follows. Large subunit of the glutamine-dependent carbamoyl phosphate synthetase (CPSase). CPSase catalyzes the formation of carbamoyl phosphate from the ammonia moiety of glutamine, carbonate, and phosphate donated by ATP, constituting the first step of 2 biosynthetic pathways, one leading to arginine and/or urea and the other to pyrimidine nucleotides. The large subunit (synthetase) binds the substrates ammonia (free or transferred from glutamine from the small subunit), hydrogencarbonate and ATP and carries out an ATP-coupled ligase reaction, activating hydrogencarbonate by forming carboxy phosphate which reacts with ammonia to form carbamoyl phosphate. The sequence is that of Carbamoyl phosphate synthase large chain from Clostridium beijerinckii (strain ATCC 51743 / NCIMB 8052) (Clostridium acetobutylicum).